Reading from the N-terminus, the 206-residue chain is Putative metal transport protein HI_1621 (206 aa).

6 helical membrane passes run glycine 6–valine 26, leucine 38–isoleucine 58, phenylalanine 72–phenylalanine 92, phenylalanine 94–alanine 114, isoleucine 136–leucine 156, and leucine 165–valine 185.

It belongs to the CbiM family.

It is found in the cell membrane. Functionally, may be involved in metal transport. The protein is Putative metal transport protein HI_1621 of Haemophilus influenzae (strain ATCC 51907 / DSM 11121 / KW20 / Rd).